Here is a 76-residue protein sequence, read N- to C-terminus: Small proline-rich protein 4 (76 aa).

The segment at 38–76 (PKTKDPCVPQAKKQCPARSTTNPAQEKCPAQQDPKCKQK) is disordered.

It belongs to the cornifin (SPRR) family. Cross-linked to membrane proteins by transglutaminase.

It localises to the cytoplasm. The protein localises to the cell cortex. In terms of biological role, cross-linked envelope protein of keratinocytes. Involved in UV-induced cornification. This is Small proline-rich protein 4 (Sprr4) from Mus musculus (Mouse).